The following is a 187-amino-acid chain: tRNA (mnm(5)s(2)U34)-methyltransferase (187 aa).

S-adenosyl-L-methionine contacts are provided by N31, N33, D51, Q53, H77, and E78.

Belongs to the methyltransferase superfamily. MnmM family. Homodimer.

The catalysed reaction is 5-aminomethyl-2-thiouridine(34) in tRNA + S-adenosyl-L-methionine = 5-methylaminomethyl-2-thiouridine(34) in tRNA + S-adenosyl-L-homocysteine + H(+). It functions in the pathway tRNA modification. Functionally, involved in the biosynthesis of 5-methylaminomethyl-2-thiouridine (mnm(5)s(2)U) at the wobble position (U34) in tRNA. Catalyzes the transfer of a methyl group from S-adenosyl-L-methionine to nm(5)s(2)U34 to form mnm(5)s(2)U34. The protein is tRNA (mnm(5)s(2)U34)-methyltransferase of Staphylococcus aureus (strain NCTC 8325 / PS 47).